The sequence spans 620 residues: Probable translation initiation factor IF-2 (620 aa).

Positions 1 to 10 (MSDTDADADT) are enriched in acidic residues. The tract at residues 1–29 (MSDTDADADTDAVSTTETSMNADANANAD) is disordered. Over residues 11–29 (DAVSTTETSMNADANANAD) the composition is skewed to low complexity. A tr-type G domain is found at 33 to 248 (LRTPIVAVLG…VLMGLSQRYM (216 aa)). Residues 42–49 (GHVDHGKT) are G1. 42–49 (GHVDHGKT) contacts GTP. The G2 stretch occupies residues 67 to 71 (AITQH). Residues 104–107 (DTPG) are G3. GTP-binding positions include 104-108 (DTPGH) and 158-161 (NKVD). A G4 region spans residues 158–161 (NKVD). The span at 162–183 (TTPGWTPTDGSPIQPTYESQPS) shows a compositional bias: polar residues. The disordered stretch occupies residues 162 to 185 (TTPGWTPTDGSPIQPTYESQPSAA). Residues 226–228 (SAI) form a G5 region.

This sequence belongs to the TRAFAC class translation factor GTPase superfamily. Classic translation factor GTPase family. IF-2 subfamily.

Function in general translation initiation by promoting the binding of the formylmethionine-tRNA to ribosomes. Seems to function along with eIF-2. The polypeptide is Probable translation initiation factor IF-2 (Haloquadratum walsbyi (strain DSM 16790 / HBSQ001)).